Reading from the N-terminus, the 399-residue chain is L-2-hydroxyglutarate dehydrogenase (399 aa).

This sequence belongs to the L2HGDH family. Requires FAD as cofactor.

It carries out the reaction (S)-2-hydroxyglutarate + A = 2-oxoglutarate + AH2. Catalyzes the dehydrogenation of L-2-hydroxyglutarate (L2HG or(S)-2-hydroxyglutarate) to 2-oxoglutarate (alpha-ketoglutarate). Active in vitro with the artificial electron acceptor 2,6-dichlorophenolindophenol (DCPIP). Also displays a very low oxidase activity in vitro on L-2-hydroxyglutarate with O2 as the electron acceptor, but this activity is most likely not physiological. This chain is L-2-hydroxyglutarate dehydrogenase, found in Indibacter alkaliphilus (strain CCUG 57479 / KCTC 22604 / LW1).